Here is a 56-residue protein sequence, read N- to C-terminus: PI-stichotoxin-Hmg3b (56 aa).

One can recognise a BPTI/Kunitz inhibitor domain in the interval 4–54 (CLEPKVVGPCKAGIRRFYFDSETGKCTLFLYGGCKGNGNNFETLHACRAIC). Intrachain disulfides connect Cys4–Cys54, Cys13–Cys37, and Cys29–Cys50.

This sequence belongs to the venom Kunitz-type family. Sea anemone type 2 potassium channel toxin subfamily. In terms of processing, contains three disulfide bonds.

Its subcellular location is the secreted. The protein resides in the nematocyst. In terms of biological role, serine protease inhibitor. The polypeptide is PI-stichotoxin-Hmg3b (Heteractis magnifica (Magnificent sea anemone)).